Reading from the N-terminus, the 222-residue chain is Ribosomal RNA small subunit methyltransferase G (222 aa).

Glycine 80, leucine 85, and arginine 149 together coordinate S-adenosyl-L-methionine.

This sequence belongs to the methyltransferase superfamily. RNA methyltransferase RsmG family.

It is found in the cytoplasm. Its function is as follows. Specifically methylates the N7 position of a guanine in 16S rRNA. This Treponema pallidum (strain Nichols) protein is Ribosomal RNA small subunit methyltransferase G.